Consider the following 1469-residue polypeptide: Accumulation-associated protein (1469 aa).

The first 52 residues, Met-1–Ala-52, serve as a signal peptide directing secretion. 3 disordered regions span residues Ala-52–Val-164, Gly-486–Thr-511, and Glu-528–Glu-1443. Composition is skewed to polar residues over residues Glu-75 to Gln-94 and Lys-110 to Pro-125. Residues Asp-129 to Glu-144 are compositionally biased toward basic and acidic residues. Polar residues predominate over residues Leu-145–Val-164. G5 domains follow at residues Pro-446–Glu-528, Tyr-574–Glu-656, Tyr-702–Glu-784, Tyr-830–Glu-912, Tyr-958–Glu-1040, Tyr-1086–Gln-1168, and Val-1211–Lys-1296. Positions Thr-489–Thr-500 are enriched in low complexity. 2 stretches are compositionally biased toward basic and acidic residues: residues Glu-528–Phe-537 and Pro-589–Pro-613. Over residues Gly-614–Gly-629 the composition is skewed to low complexity. 2 stretches are compositionally biased toward basic and acidic residues: residues Lys-631–Val-646 and Glu-655–Phe-665. The segment covering Lys-738–Gly-757 has biased composition (low complexity). Basic and acidic residues-rich tracts occupy residues Lys-759–Phe-793 and Pro-845–Pro-869. A compositionally biased stretch (low complexity) spans Gly-870 to Gly-885. Positions Lys-887 to Phe-921 are enriched in basic and acidic residues. Positions Lys-994–Gly-1013 are enriched in low complexity. Residues Lys-1015–Phe-1049 are compositionally biased toward basic and acidic residues. Over residues Lys-1122–Gly-1141 the composition is skewed to low complexity. Basic and acidic residues-rich tracts occupy residues Lys-1143–Val-1162, Pro-1229–Pro-1253, and Lys-1271–Val-1286. The span at Thr-1409 to Glu-1443 shows a compositional bias: polar residues. The LPXTG sorting signal motif lies at Leu-1432–Gly-1436. Thr-1435 bears the Pentaglycyl murein peptidoglycan amidated threonine mark. The propeptide at Gly-1436–Lys-1469 is removed by sortase.

It is found in the secreted. The protein localises to the cell wall. In Staphylococcus epidermidis (strain ATCC 12228 / FDA PCI 1200), this protein is Accumulation-associated protein.